Reading from the N-terminus, the 218-residue chain is uncharacterized protein (218 aa).

3 disordered regions span residues 30-71, 93-120, and 133-209; these read FSHR…RSPP, SGRGGGGGGGGGARTGGGEGEDRRPRPD, and MEVE…PGFP. Low complexity predominate over residues 43–71; the sequence is PGAPAVVPAPVSAPRPASSPARSESRSPP. Residues 94-110 show a composition bias toward gly residues; sequence GRGGGGGGGGGARTGGG. Residues 138–148 show a composition bias toward pro residues; sequence PPHPPPQPQVC. Positions 156-171 are enriched in gly residues; sequence PGHGRAGLPEGKGPGG. Over residues 191–209 the composition is skewed to low complexity; sequence RAPSPAAPRRGRLPAPGFP.

This is an uncharacterized protein from Homo sapiens (Human).